Consider the following 701-residue polypeptide: Potassium-transporting ATPase ATP-binding subunit 1 (701 aa).

Residues 1 to 26 are disordered; that stretch reads MNPVAPTRKVKPPRNRPSDRRQARKK. A run of 4 helical transmembrane segments spans residues 57–77, 90–110, 241–261, and 278–298; these read MFVVWVATLVTLAVTINPDLF, GLLTGILFFTVWFANFAEAVA, VALTVLLAVLSLVFLFVIATL, and IALLVALIPTTIGGLLSAIGI. Asp329 acts as the 4-aspartylphosphate intermediate in catalysis. ATP-binding positions include Asp366, Glu370, 397–404, and Lys416; that span reads FSAKTRMS. 2 residues coordinate Mg(2+): Asp539 and Asp543. 3 helical membrane-spanning segments follow: residues 599 to 619, 635 to 655, and 681 to 701; these read FSIANDIAKYFAIIPVIFAAA, AVLSALIYNALIIPALIPLAL, and VIAPFIAIKLIDILITLVGLA.

This sequence belongs to the cation transport ATPase (P-type) (TC 3.A.3) family. Type IA subfamily. As to quaternary structure, the system is composed of three essential subunits: KdpA, KdpB and KdpC.

It is found in the cell inner membrane. It carries out the reaction K(+)(out) + ATP + H2O = K(+)(in) + ADP + phosphate + H(+). Part of the high-affinity ATP-driven potassium transport (or Kdp) system, which catalyzes the hydrolysis of ATP coupled with the electrogenic transport of potassium into the cytoplasm. This subunit is responsible for energy coupling to the transport system and for the release of the potassium ions to the cytoplasm. This is Potassium-transporting ATPase ATP-binding subunit 1 from Nostoc sp. (strain PCC 7120 / SAG 25.82 / UTEX 2576).